Reading from the N-terminus, the 95-residue chain is Small ribosomal subunit protein bS20 (95 aa).

Disordered regions lie at residues 1 to 26 and 76 to 95; these read MALR…RSRK and KSRL…AQPA. A compositionally biased stretch (low complexity) spans 80-95; it reads AKALNKAKAAQAAQPA.

It belongs to the bacterial ribosomal protein bS20 family.

Binds directly to 16S ribosomal RNA. This is Small ribosomal subunit protein bS20 from Deinococcus geothermalis (strain DSM 11300 / CIP 105573 / AG-3a).